The chain runs to 223 residues: Phosphoribosylformylglycinamidine synthase subunit PurQ (223 aa).

Positions 3–223 constitute a Glutamine amidotransferase type-1 domain; it reads FAVLVFPGSN…MVNSWREQNV (221 aa). Cysteine 85 (nucleophile) is an active-site residue. Active-site residues include histidine 193 and glutamate 195.

In terms of assembly, part of the FGAM synthase complex composed of 1 PurL, 1 PurQ and 2 PurS subunits.

The protein localises to the cytoplasm. The catalysed reaction is N(2)-formyl-N(1)-(5-phospho-beta-D-ribosyl)glycinamide + L-glutamine + ATP + H2O = 2-formamido-N(1)-(5-O-phospho-beta-D-ribosyl)acetamidine + L-glutamate + ADP + phosphate + H(+). It catalyses the reaction L-glutamine + H2O = L-glutamate + NH4(+). It participates in purine metabolism; IMP biosynthesis via de novo pathway; 5-amino-1-(5-phospho-D-ribosyl)imidazole from N(2)-formyl-N(1)-(5-phospho-D-ribosyl)glycinamide: step 1/2. Part of the phosphoribosylformylglycinamidine synthase complex involved in the purines biosynthetic pathway. Catalyzes the ATP-dependent conversion of formylglycinamide ribonucleotide (FGAR) and glutamine to yield formylglycinamidine ribonucleotide (FGAM) and glutamate. The FGAM synthase complex is composed of three subunits. PurQ produces an ammonia molecule by converting glutamine to glutamate. PurL transfers the ammonia molecule to FGAR to form FGAM in an ATP-dependent manner. PurS interacts with PurQ and PurL and is thought to assist in the transfer of the ammonia molecule from PurQ to PurL. This is Phosphoribosylformylglycinamidine synthase subunit PurQ from Staphylococcus haemolyticus (strain JCSC1435).